The chain runs to 257 residues: Thiazole synthase (257 aa).

The Schiff-base intermediate with DXP role is filled by K97. 1-deoxy-D-xylulose 5-phosphate is bound by residues G158, A184–G185, and N206–T207.

The protein belongs to the ThiG family. Homotetramer. Forms heterodimers with either ThiH or ThiS.

It localises to the cytoplasm. It carries out the reaction [ThiS sulfur-carrier protein]-C-terminal-Gly-aminoethanethioate + 2-iminoacetate + 1-deoxy-D-xylulose 5-phosphate = [ThiS sulfur-carrier protein]-C-terminal Gly-Gly + 2-[(2R,5Z)-2-carboxy-4-methylthiazol-5(2H)-ylidene]ethyl phosphate + 2 H2O + H(+). The protein operates within cofactor biosynthesis; thiamine diphosphate biosynthesis. Functionally, catalyzes the rearrangement of 1-deoxy-D-xylulose 5-phosphate (DXP) to produce the thiazole phosphate moiety of thiamine. Sulfur is provided by the thiocarboxylate moiety of the carrier protein ThiS. In vitro, sulfur can be provided by H(2)S. This chain is Thiazole synthase, found in Desulforamulus reducens (strain ATCC BAA-1160 / DSM 100696 / MI-1) (Desulfotomaculum reducens).